The primary structure comprises 559 residues: MSEKQVPSFRWTQALRRGLSNWTEPVKVDVIKDARAIISALDFNQVAQVQRIMRKEKRTDSDLTRLRDMNKEVDALMSMRSTQHNVVLRAGGLSKDELLELSADLEKLRKKVIRAEGGNPGVYQGNLTATQLNQRAELMKLVGMGPGLRSGNGVVRVWDVKDSSLMINQFGSMPALTIACMTEQGGETMNDVVQGLSALGLVYTVKFPNLDDLEKLSEQHPCLKSITQEQSQINISGYNLSLSAAVKAGACMIDGGNMLETIKMSPPMFSSIIKAVLQVKNREQMFVGSVGVQRNPYENLLYKLCLSGEGWPYIGSRSQIVGRAWDNTLIDLEGKPAVSPPPVKNGGPINLSPLSKGQEDLINQAVQKLSPKETTWIDIEGPAGDPVELAIYQPESGNYLHCYRAPHNESAFKDQSRYSHGLLLKDLKAARPGLISAIIKALPKGMVLTAQGSDDIEQLILMHGRRDIKVVDVKLTSEHARVFEDPVWDRFNPLCEKHTGLVIKKKKKGAPPSSTNPHCALMDCIMFDATVTGYIRDVKPRQLIPIDLLFKDDLNLINL.

Residues 53–235 (MRKEKRTDSD…ITQEQSQINI (183 aa)) are binding site for the cap structure m7GTP. Mn(2+) contacts are provided by aspartate 378 and glutamate 380. Zn(2+)-binding residues include glutamate 388, cysteine 495, histidine 498, and cysteine 519. Aspartate 523 lines the Mn(2+) pocket.

This sequence belongs to the arenaviridae nucleocapsid protein family. As to quaternary structure, homomultimerizes to form the nucleocapsid. Binds to viral genomic RNA. Interacts with glycoprotein G2. Interacts with protein Z; this interaction probably directs the encapsidated genome to budding sites. Interacts with protein L; this interaction does not interfere with Z-L interaction. Interacts with host IKBKE (via Protein kinase domain); the interaction inhibits IKBKE kinase activity.

It localises to the virion. The protein resides in the host cytoplasm. Encapsidates the genome, protecting it from nucleases. The encapsidated genomic RNA is termed the nucleocapsid (NC). Serves as template for viral transcription and replication. The increased presence of protein N in host cell does not seem to trigger the switch from transcription to replication as observed in other negative strain RNA viruses. Through the interaction with host IKBKE, strongly inhibits the phosphorylation and nuclear translocation of host IRF3, a protein involved in interferon activation pathway, leading to the inhibition of interferon-beta and IRF3-dependent promoters activation. Also encodes a functional 3'-5' exoribonuclease that degrades preferentially dsRNA substrates and thereby participates in the suppression of interferon induction. In Sooretamys angouya (Paraguayan rice rat), this protein is Nucleoprotein.